A 342-amino-acid chain; its full sequence is Succinylglutamate desuccinylase (342 aa).

His63, Glu66, and His155 together coordinate Zn(2+). Glu219 is an active-site residue.

The protein belongs to the AspA/AstE family. Succinylglutamate desuccinylase subfamily. The cofactor is Zn(2+).

It catalyses the reaction N-succinyl-L-glutamate + H2O = L-glutamate + succinate. It functions in the pathway amino-acid degradation; L-arginine degradation via AST pathway; L-glutamate and succinate from L-arginine: step 5/5. Its function is as follows. Transforms N(2)-succinylglutamate into succinate and glutamate. This is Succinylglutamate desuccinylase from Vibrio cholerae serotype O1 (strain ATCC 39315 / El Tor Inaba N16961).